A 92-amino-acid chain; its full sequence is Small ribosomal subunit protein uS19 (92 aa).

This sequence belongs to the universal ribosomal protein uS19 family.

Protein S19 forms a complex with S13 that binds strongly to the 16S ribosomal RNA. This Gloeobacter violaceus (strain ATCC 29082 / PCC 7421) protein is Small ribosomal subunit protein uS19.